The chain runs to 502 residues: Ribose import ATP-binding protein RbsA (502 aa).

2 ABC transporter domains span residues 3 to 239 and 249 to 493; these read VTMR…VGRE and AAPG…TGGA. 35-42 is a binding site for ATP; that stretch reads GENGAGKS.

This sequence belongs to the ABC transporter superfamily. Ribose importer (TC 3.A.1.2.1) family. As to quaternary structure, the complex is composed of an ATP-binding protein (RbsA), two transmembrane proteins (RbsC) and a solute-binding protein (RbsB).

The protein resides in the cell inner membrane. The catalysed reaction is D-ribose(out) + ATP + H2O = D-ribose(in) + ADP + phosphate + H(+). Functionally, part of the ABC transporter complex RbsABC involved in ribose import. Responsible for energy coupling to the transport system. The protein is Ribose import ATP-binding protein RbsA of Chromobacterium violaceum (strain ATCC 12472 / DSM 30191 / JCM 1249 / CCUG 213 / NBRC 12614 / NCIMB 9131 / NCTC 9757 / MK).